The sequence spans 144 residues: Giant hemoglobin AIII chain (144 aa).

Positions 2–144 (ECGPLQRLKV…DVITGGIQGN (143 aa)) constitute a Globin domain. Histidine 95 contacts heme b.

This sequence belongs to the globin family. In terms of assembly, giant hemoglobin is composed of four heme-containing chains (AI to AIV), and two linker chains (AV and AVI).

This chain is Giant hemoglobin AIII chain, found in Lamellibrachia sp. (Deep-sea giant tube worm).